Consider the following 137-residue polypeptide: Partner of bursicon (137 aa).

The signal sequence occupies residues 1–24 (MNIMITKIFFLVQLFYIVVSKSSA). Intrachain disulfides connect cysteine 28–cysteine 86, cysteine 52–cysteine 101, cysteine 61–cysteine 127, cysteine 65–cysteine 129, and cysteine 83–cysteine 132. Residues 28-123 (CETVASEVHV…NALMEVRLRE (96 aa)) enclose the CTCK domain.

As to quaternary structure, heterodimer of burs and pburs.

It is found in the secreted. Its function is as follows. Final heterodimeric neurohormone released at the end of the molting cycle, involved in the sclerotization (tanning) of the insect cuticle, melanization and wing spreading. The chain is Partner of bursicon from Bombyx mori (Silk moth).